The chain runs to 375 residues: Probable peptidoglycan glycosyltransferase FtsW (375 aa).

Over 1-16 (MNLNFKLNLKEIERYD) the chain is Cytoplasmic. The helical transmembrane segment at 17–37 (LVILLMAVALTCFGVVMVYSA) threads the bilayer. Topologically, residues 38 to 49 (SSVMATKKFHDG) are periplasmic. The helical transmembrane segment at 50-70 (FYFLKRQGIYAILGCAAMIVA) threads the bilayer. Residues 71–81 (MRIDYRQWREY) are Cytoplasmic-facing. A helical membrane pass occupies residues 82–102 (AVPILLGCLLLLLLVFIPGIG). At 103–145 (GAAKGASRWIRFPGFNLQPSELAKIALIMYMAYSLDKKQEKVK) the chain is on the periplasmic side. The chain crosses the membrane as a helical span at residues 146–166 (FFSTGFAPYMVLLAILLAILL). Over 167–169 (KQH) the chain is Cytoplasmic. Residues 170 to 190 (DLGSALTMGGVAILMLFAAGT) traverse the membrane as a helical segment. Residues 191-193 (RPR) are Periplasmic-facing. The chain crosses the membrane as a helical span at residues 194-214 (YILGMVVLTLPFLYFLVMNVD). Topologically, residues 215–233 (YRRRRILAYLNPWEDPTNT) are cytoplasmic. The chain crosses the membrane as a helical span at residues 234–254 (GFQIIQSWLAFGNGGIIGQGL). The Periplasmic segment spans residues 255–279 (GEGKQKMFFLPEAHTDFILSVVGEE). The helical transmembrane segment at 280-300 (LGLIGVIVIAAMFLMLVLRGV) threads the bilayer. The Cytoplasmic segment spans residues 301-312 (RVALMAQDPFGR). A helical membrane pass occupies residues 313 to 333 (FLAFGIVTLLGIQAFVNMGVV). Over 334–343 (TGLLPTKGLA) the chain is Periplasmic. Residues 344 to 364 (LPFISYGGSSLIVTLFAVGIL) form a helical membrane-spanning segment. At 365–375 (LNVSTRMKGTP) the chain is on the cytoplasmic side.

Belongs to the SEDS family. FtsW subfamily.

It is found in the cell inner membrane. It carries out the reaction [GlcNAc-(1-&gt;4)-Mur2Ac(oyl-L-Ala-gamma-D-Glu-L-Lys-D-Ala-D-Ala)](n)-di-trans,octa-cis-undecaprenyl diphosphate + beta-D-GlcNAc-(1-&gt;4)-Mur2Ac(oyl-L-Ala-gamma-D-Glu-L-Lys-D-Ala-D-Ala)-di-trans,octa-cis-undecaprenyl diphosphate = [GlcNAc-(1-&gt;4)-Mur2Ac(oyl-L-Ala-gamma-D-Glu-L-Lys-D-Ala-D-Ala)](n+1)-di-trans,octa-cis-undecaprenyl diphosphate + di-trans,octa-cis-undecaprenyl diphosphate + H(+). The protein operates within cell wall biogenesis; peptidoglycan biosynthesis. Functionally, peptidoglycan polymerase that is essential for cell division. The protein is Probable peptidoglycan glycosyltransferase FtsW of Geobacter metallireducens (strain ATCC 53774 / DSM 7210 / GS-15).